We begin with the raw amino-acid sequence, 341 residues long: Bis(monoacylglycero)phosphate synthase CLN5 (341 aa).

The Cytoplasmic portion of the chain corresponds to 1 to 13 (MLRGGPCGAHWRP). The chain crosses the membrane as a helical; Signal-anchor for type II membrane protein span at residues 14 to 30 (ALALALLGLATILGASP). Over 31–341 (TSGQRWPVPY…PTRHTTFTDL (311 aa)) the chain is Lumenal. 2 disulfide bridges follow: C53–C142 and C60–C148. The Proton acceptor role is filled by H100. 4 N-linked (GlcNAc...) asparagine glycosylation sites follow: N113, N126, N161, and N186. The active-site Nucleophile; Acyl-thioester intermediate is C214. 3 N-linked (GlcNAc...) asparagine glycosylation sites follow: N238, N254, and N264. The segment at 287–326 (FLMNFLKIFDTVIIHRQFYLFYNFEYWFLPMKPPFVKITY) is membrane-anchoring.

This sequence belongs to the CLN5 family. Multimer. Interacts with PPT1, TPP1, CLN3, CLN6, CLN8, ATP5F1A and ATP5F1B. Interacts with SORT1, RAB5A and RAB7A. N-glycosylated with both high mannose and complex type sugars. Glycosylation is important for proper folding and trafficking to the lysosomes. Post-translationally, the type II membrane signal anchor is proteolytically cleaved to produce a mature form that is transported to the lysosomes (Bis(monoacylglycero)phosphate synthase CLN5, secreted form). In terms of processing, can undergo proteolytic cleavage at the C-terminus, probably by a cysteine protease and may involve the removal of approximately 10-15 residues from the C-terminal end. As to expression, heart, kidney, liver, spleen, muscle and rectum (at protein level).

It localises to the lysosome. The protein resides in the membrane. It carries out the reaction S-hexadecanoyl-L-cysteinyl-[protein] + H2O = L-cysteinyl-[protein] + hexadecanoate + H(+). It catalyses the reaction 2 1-acyl-sn-glycero-3-phospho-(1'-sn-glycerol) = 1-acyl-sn-glycero-3-phospho-(3'-acyl-sn-1'-glycerol) + sn-glycero-3-phospho-(1'-sn-glycerol). The catalysed reaction is 2 1-(9Z-octadecenoyl)-sn-glycero-3-phospho-(1'-sn-glycerol) = 1-(9Z-octadecenoyl)-sn-glycero-3-phospho-(3'-(9Z-octadecenoyl)-1'-sn-glycerol) + sn-glycero-3-phospho-(1'-sn-glycerol). The enzyme catalyses 2 1-octadecanoyl-sn-glycero-3-phospho-(1'-sn-glycerol) = 1-octadecanoyl-sn-glycero-3-phospho-(3'-octadecanoyl-1'-sn-glycerol) + sn-glycero-3-phospho-(1'-sn-glycerol). It carries out the reaction 2 1-hexadecanoyl-sn-glycero-3-phospho-(1'-sn-glycerol) = 1-hexadecanoyl-sn-glycero-3-phospho-(3'-hexadecanoyl-1'-sn-glycerol) + sn-glycero-3-phospho-(1'-sn-glycerol). It catalyses the reaction 2 1-tetradecanoyl-sn-glycero-3-phospho-(1'-sn-glycerol) = 1-tetradecanoyl-sn-glycero-3-phospho-(3'-tetradecanoyl-1'-sn-glycerol) + sn-glycero-3-phospho-(1'-sn-glycerol). Its function is as follows. Catalyzes the synthesis of bis(monoacylglycero)phosphate (BMP) via transacylation of 2 molecules of lysophosphatidylglycerol (LPG). BMP also known as lysobisphosphatidic acid plays a key role in the formation of intraluminal vesicles and in maintaining intracellular cholesterol homeostasis. Can use only LPG as the exclusive lysophospholipid acyl donor for base exchange and displays BMP synthase activity towards various LPGs (LPG 14:0, LPG 16:0, LPG 18:0, LPG 18:1) with a higher preference for longer chain lengths. Plays a role in influencing the retrograde trafficking of lysosomal sorting receptors SORT1 and IGF2R from the endosomes to the trans-Golgi network by controlling the recruitment of retromer complex to the endosomal membrane. Regulates the localization and activation of RAB7A which is required to recruit the retromer complex to the endosomal membrane. Functionally, exhibits palmitoyl protein thioesterase (S-depalmitoylation) activity in vitro and most likely plays a role in protein S-depalmitoylation. This is Bis(monoacylglycero)phosphate synthase CLN5 (Cln5) from Mus musculus (Mouse).